Consider the following 686-residue polypeptide: Leucine-rich repeat-containing protein 49 (686 aa).

LRR repeat units lie at residues histidine 113 to glutamine 134, lysine 135 to arginine 156, cysteine 157 to lysine 178, serine 179 to cysteine 200, glutamate 201 to aspartate 222, serine 223 to proline 244, and cysteine 245 to alanine 266. The LRRCT domain maps to asparagine 279–leucine 317. The stretch at methionine 303–threonine 341 forms a coiled coil. The segment at alanine 360–glutamate 388 is disordered.

Part of the neuronal tubulin polyglutamylase complex which contains TPGS1, TPGS2, TTLL1, LRRC49 and NICN1. Interacts with PCM1; TTLL1, TPGS1, TPGS2 and LRRC49.

It localises to the cytoplasm. It is found in the cytoskeleton. Its subcellular location is the microtubule organizing center. The protein localises to the centrosome. The protein resides in the centriolar satellite. In terms of biological role, subunit of the tubulin polyglutamylase complex (TPGC). The complex mediates cilia and flagella polyglutamylation which is essential for their biogenesis and motility. This is Leucine-rich repeat-containing protein 49 from Homo sapiens (Human).